The sequence spans 238 residues: Ribonuclease PH (238 aa).

Phosphate contacts are provided by residues Arg86 and 124-126; that span reads GTR.

This sequence belongs to the RNase PH family. Homohexameric ring arranged as a trimer of dimers.

It carries out the reaction tRNA(n+1) + phosphate = tRNA(n) + a ribonucleoside 5'-diphosphate. In terms of biological role, phosphorolytic 3'-5' exoribonuclease that plays an important role in tRNA 3'-end maturation. Removes nucleotide residues following the 3'-CCA terminus of tRNAs; can also add nucleotides to the ends of RNA molecules by using nucleoside diphosphates as substrates, but this may not be physiologically important. Probably plays a role in initiation of 16S rRNA degradation (leading to ribosome degradation) during starvation. The protein is Ribonuclease PH of Actinobacillus pleuropneumoniae serotype 7 (strain AP76).